Here is a 931-residue protein sequence, read N- to C-terminus: MAARDSDSEEDLVSYGTGLEPLEEGERPKKPIPLQDQTVRDEKGRYKRFHGAFSGGFSAGYFNTVGSKEGWTPSTFVSSRQNRADKSVLGPEDFMDEEDLSEFGIAPKAIVTTDDFASKTKDRIREKARQLAAATAPIPGATLLDDLITPAKLSVGFELLRKMGWKEGQGVGPRVKRRPRRQKPDPGVKIYGCALPPGSSEGSEGEDDDYLPDNVTFAPKDVTPVDFTPKDNVHGLAYKGLDPHQALFGTSGEHFNLFSGGSERAGDLGEIGLNKGRKLGISGQAFGVGALEEEDDDIYATETLSKYDTVLKDEEPGDGLYGWTAPRQYKNQKESEKDLRYVGKILDGFSLASKPLSSKKIYPPPELPRDYRPVHYFRPMVAATSENSHLLQVLSESAGKATPDPGTHSKHQLNASKRAELLGETPIQGSATSVLEFLSQKDKERIKEMKQATDLKAAQLKARSLAQNAQSSRAQLSPAAAAGHCSWNMALGGGTATLKASNFKPFAKDPEKQKRYDEFLVHMKQGQKDALERCLDPSMTEWERGRERDEFARAALLYASSHSTLSSRFTHAKEEDDSDQVEVPRDQENDVGDKQSAVKMKMFGKLTRDTFEWHPDKLLCKRFNVPDPYPDSTLVGLPRVKRDKYSVFNFLTLPETASLPTTQASSEKVSQHRGPDKSRKPSRWDTSKHEKKEDSISEFLSLARSKAEPPKQQSSPLVNKEEEHAPELSANQTVNKDVDAQAEGEGSRPSMDLFRAIFASSSDEKSSSSEDEQGDSEDDQAGSGEANFQSSQDTDLGETSSVAHALVPAPQEPPPSFPIQKMQIDEREEFGPRLPPVFCPNARQTLEVPQKEKHKKNKDKHKAKKEHRRKKEKKKKHRKHKHKGKQKNKKPEKSSSSESSDSSDSQSDEETADVSPQELLRRLKSLPLRRQ.

Disordered stretches follow at residues 1 to 41, 73 to 92, and 169 to 209; these read MAAR…TVRD, PSTF…LGPE, and QGVG…EDDD. An N-acetylalanine modification is found at Ala-2. Ser-6 and Ser-8 each carry phosphoserine. The 47-residue stretch at 152 to 198 folds into the G-patch domain; the sequence is KLSVGFELLRKMGWKEGQGVGPRVKRRPRRQKPDPGVKIYGCALPPG. Lys-312 participates in a covalent cross-link: Glycyl lysine isopeptide (Lys-Gly) (interchain with G-Cter in SUMO2). 2 positions are modified to phosphoserine: Ser-357 and Ser-477. Disordered regions lie at residues 568–595 and 659–931; these read RFTH…GDKQ and LPTT…LRRQ. Basic and acidic residues predominate over residues 582 to 593; sequence EVPRDQENDVGD. A compositionally biased stretch (polar residues) spans 659–668; sequence LPTTQASSEK. The segment covering 669–695 has biased composition (basic and acidic residues); it reads VSQHRGPDKSRKPSRWDTSKHEKKEDS. Ser-715 is subject to Phosphoserine. The span at 769-780 shows a compositional bias: acidic residues; the sequence is SEDEQGDSEDDQ. Polar residues predominate over residues 786–802; sequence ANFQSSQDTDLGETSSV. Over residues 852–888 the composition is skewed to basic residues; it reads EKHKKNKDKHKAKKEHRRKKEKKKKHRKHKHKGKQKN. Over residues 896–905 the composition is skewed to low complexity; the sequence is SSESSDSSDS. A compositionally biased stretch (basic residues) spans 922-931; the sequence is RLKSLPLRRQ.

Belongs to the GPATCH1 family.

The protein is G patch domain-containing protein 1 (GPATCH1) of Homo sapiens (Human).